Here is a 224-residue protein sequence, read N- to C-terminus: MAAQNQSAQKDLEIQVKTPDGKVDGSVALPAELFDVPANIALMHQVVTAQRAAARQGTHSTKTRGDVSGGGRKPYRQKGTGRARQGSTRAPQFTGGGVVHGPKPRDYSQRTPKKMIAAALRGALSDRARNGRIHAVTELVAGQTPSTKSAKTFLATITDRKQVLVVIGRDDQTGVKSVRNLPGVHILSPDQLNTYDVLRADDVVFSVEALNAYIAANTSEEVSA.

The segment at 52–109 (AAARQGTHSTKTRGDVSGGGRKPYRQKGTGRARQGSTRAPQFTGGGVVHGPKPRDYSQ) is disordered.

This sequence belongs to the universal ribosomal protein uL4 family. Part of the 50S ribosomal subunit.

In terms of biological role, one of the primary rRNA binding proteins, this protein initially binds near the 5'-end of the 23S rRNA. It is important during the early stages of 50S assembly. It makes multiple contacts with different domains of the 23S rRNA in the assembled 50S subunit and ribosome. Forms part of the polypeptide exit tunnel. The polypeptide is Large ribosomal subunit protein uL4 (Mycobacterium marinum (strain ATCC BAA-535 / M)).